Reading from the N-terminus, the 118-residue chain is Small ribosomal subunit protein uS13 (118 aa).

The tract at residues 94–118 (GLPLRGQRTKTNARTRKGRRKGTSS) is disordered.

It belongs to the universal ribosomal protein uS13 family. As to quaternary structure, part of the 30S ribosomal subunit. Forms a loose heterodimer with protein S19. Forms two bridges to the 50S subunit in the 70S ribosome.

Its function is as follows. Located at the top of the head of the 30S subunit, it contacts several helices of the 16S rRNA. In the 70S ribosome it contacts the 23S rRNA (bridge B1a) and protein L5 of the 50S subunit (bridge B1b), connecting the 2 subunits; these bridges are implicated in subunit movement. Contacts the tRNAs in the A and P-sites. In Legionella pneumophila (strain Paris), this protein is Small ribosomal subunit protein uS13.